The sequence spans 336 residues: Tetraacyldisaccharide 4'-kinase (336 aa).

ATP is bound at residue Thr-60–Thr-67.

This sequence belongs to the LpxK family.

It catalyses the reaction a lipid A disaccharide + ATP = a lipid IVA + ADP + H(+). It functions in the pathway glycolipid biosynthesis; lipid IV(A) biosynthesis; lipid IV(A) from (3R)-3-hydroxytetradecanoyl-[acyl-carrier-protein] and UDP-N-acetyl-alpha-D-glucosamine: step 6/6. Transfers the gamma-phosphate of ATP to the 4'-position of a tetraacyldisaccharide 1-phosphate intermediate (termed DS-1-P) to form tetraacyldisaccharide 1,4'-bis-phosphate (lipid IVA). The chain is Tetraacyldisaccharide 4'-kinase from Pseudomonas fluorescens (strain ATCC BAA-477 / NRRL B-23932 / Pf-5).